The sequence spans 235 residues: Phosphoribosylaminoimidazole-succinocarboxamide synthase (235 aa).

This sequence belongs to the SAICAR synthetase family.

It carries out the reaction 5-amino-1-(5-phospho-D-ribosyl)imidazole-4-carboxylate + L-aspartate + ATP = (2S)-2-[5-amino-1-(5-phospho-beta-D-ribosyl)imidazole-4-carboxamido]succinate + ADP + phosphate + 2 H(+). The protein operates within purine metabolism; IMP biosynthesis via de novo pathway; 5-amino-1-(5-phospho-D-ribosyl)imidazole-4-carboxamide from 5-amino-1-(5-phospho-D-ribosyl)imidazole-4-carboxylate: step 1/2. The protein is Phosphoribosylaminoimidazole-succinocarboxamide synthase of Chlorobaculum parvum (strain DSM 263 / NCIMB 8327) (Chlorobium vibrioforme subsp. thiosulfatophilum).